Here is a 57-residue protein sequence, read N- to C-terminus: uncharacterized protein (57 aa).

Residues 15–37 form a helical membrane-spanning segment; it reads GLAGLICIGLTISSGFSGSSILI.

It is found in the membrane. This is an uncharacterized protein from Dictyostelium discoideum (Social amoeba).